The following is a 187-amino-acid chain: ECF RNA polymerase sigma factor SigW (187 aa).

A sigma-70 factor domain-2 region spans residues 3–95 (MMIKKRIKQV…RKKKPDYYLD (93 aa)). The Polymerase core binding motif lies at 47–50 (DIAQ). Residues 125–187 (ELSNTIQQKI…EALRKQLRDL (63 aa)) form a sigma-70 factor domain-4 region. The segment at residues 166–184 (VGTVKTRIHRGREALRKQL) is a DNA-binding region (H-T-H motif).

The protein belongs to the sigma-70 factor family. ECF subfamily. Interacts transiently with the RNA polymerase catalytic core formed by RpoA, RpoB, RpoC and RpoZ (2 alpha, 1 beta, 1 beta' and 1 omega subunit) to form the RNA polymerase holoenzyme that can initiate transcription. Forms a heterodimer with cognate anti-sigma factor RsiW, which prevents it from binding to the -10 and -35 promoter elements.

Its activity is regulated as follows. Extracytoplasmic function (ECF) sigma factors are held in an inactive form by a cognate anti-sigma factor (RsiW for this protein) until released by regulated membrane proteolysis (RIP). RIP occurs when an extracytoplasmic signal (envelope stress) triggers a concerted proteolytic cascade to transmit information and elicit cellular responses. The anti-sigma factor RsiW is a membrane protein, binding sigma-W in the cytoplasm. RsiW is first cut extracytoplasmically (site-1 protease, S1P, by PrsW), then within the membrane itself (site-2 protease, S2P, by RasP), while cytoplasmic proteases (predominantly ClpX-ClpP) finish degrading the regulatory protein, liberating sigma-W. Its function is as follows. Sigma factors are initiation factors that promote the attachment of RNA polymerase (RNAP) to specific initiation sites and are then released. Sigma-W controls genes involved in response to cell envelope stress such as antimicrobial peptides, alkaline pH, transport processes and detoxification. This Bacillus subtilis (strain 168) protein is ECF RNA polymerase sigma factor SigW (sigW).